The sequence spans 322 residues: Ribose-phosphate pyrophosphokinase 1 (322 aa).

ATP-binding positions include 39–41 and 98–99; these read DGE and RQ. Mg(2+)-binding residues include His-132 and Asp-173. The active site involves Lys-196. D-ribose 5-phosphate contacts are provided by residues Arg-198, Asp-224, and 228 to 232; that span reads DTAGT.

The protein belongs to the ribose-phosphate pyrophosphokinase family. Class I subfamily. As to quaternary structure, homohexamer. It depends on Mg(2+) as a cofactor.

It localises to the cytoplasm. It catalyses the reaction D-ribose 5-phosphate + ATP = 5-phospho-alpha-D-ribose 1-diphosphate + AMP + H(+). It participates in metabolic intermediate biosynthesis; 5-phospho-alpha-D-ribose 1-diphosphate biosynthesis; 5-phospho-alpha-D-ribose 1-diphosphate from D-ribose 5-phosphate (route I): step 1/1. In terms of biological role, involved in the biosynthesis of the central metabolite phospho-alpha-D-ribosyl-1-pyrophosphate (PRPP) via the transfer of pyrophosphoryl group from ATP to 1-hydroxyl of ribose-5-phosphate (Rib-5-P). The sequence is that of Ribose-phosphate pyrophosphokinase 1 from Streptococcus agalactiae serotype III (strain NEM316).